The following is a 549-amino-acid chain: Cell pattern formation-associated protein StuA (549 aa).

The region spanning Arg86 to Pro192 is the HTH APSES-type domain. The segment at residues Gly120–Glu141 is a DNA-binding region (H-T-H motif). Disordered stretches follow at residues Ala205 to Ile227, Ser246 to Arg288, Arg332 to Asn466, and Ala514 to Gly549. Residues Ser246–Gln266 show a composition bias toward polar residues. 3 stretches are compositionally biased toward basic and acidic residues: residues Arg278 to Arg288, Arg332 to His346, and Arg385 to Ser395. A nuclear localization domain region spans residues Thr516–Gln545. Low complexity predominate over residues Ala532 to Gly549.

The protein belongs to the EFG1/PHD1/stuA family.

It localises to the nucleus. In terms of biological role, transcription factor that regulates asexual reproduction. Binds the StuA-response elements (StRE) with the consensus sequence 5'-(A/T)CGCG(T/A)N(A/C)-3' at the promoters of target genes. The sequence is that of Cell pattern formation-associated protein StuA from Gibberella moniliformis (strain M3125 / FGSC 7600) (Maize ear and stalk rot fungus).